Consider the following 96-residue polypeptide: Co-chaperonin GroES (96 aa).

The interval 26 to 48 (LLPGSAQEKPSQGEVLATGNGQI) is disordered.

It belongs to the GroES chaperonin family. Heptamer of 7 subunits arranged in a ring. Interacts with the chaperonin GroEL.

It localises to the cytoplasm. Functionally, together with the chaperonin GroEL, plays an essential role in assisting protein folding. The GroEL-GroES system forms a nano-cage that allows encapsulation of the non-native substrate proteins and provides a physical environment optimized to promote and accelerate protein folding. GroES binds to the apical surface of the GroEL ring, thereby capping the opening of the GroEL channel. The chain is Co-chaperonin GroES from Psychrobacter arcticus (strain DSM 17307 / VKM B-2377 / 273-4).